The chain runs to 330 residues: Ribosomal RNA small subunit methyltransferase H (330 aa).

Residues 48–50 (GGH), Asp67, Leu101, Asp115, and Gln122 contribute to the S-adenosyl-L-methionine site.

The protein belongs to the methyltransferase superfamily. RsmH family.

It localises to the cytoplasm. It carries out the reaction cytidine(1402) in 16S rRNA + S-adenosyl-L-methionine = N(4)-methylcytidine(1402) in 16S rRNA + S-adenosyl-L-homocysteine + H(+). In terms of biological role, specifically methylates the N4 position of cytidine in position 1402 (C1402) of 16S rRNA. In Pseudarthrobacter chlorophenolicus (strain ATCC 700700 / DSM 12829 / CIP 107037 / JCM 12360 / KCTC 9906 / NCIMB 13794 / A6) (Arthrobacter chlorophenolicus), this protein is Ribosomal RNA small subunit methyltransferase H.